Consider the following 361-residue polypeptide: Ribosomal RNA large subunit methyltransferase M (361 aa).

Residues Ser187, Cys220–Gly223, Asp239, Asp259, and Asp276 contribute to the S-adenosyl-L-methionine site. Lys305 serves as the catalytic Proton acceptor.

It belongs to the class I-like SAM-binding methyltransferase superfamily. RNA methyltransferase RlmE family. RlmM subfamily. In terms of assembly, monomer.

Its subcellular location is the cytoplasm. It catalyses the reaction cytidine(2498) in 23S rRNA + S-adenosyl-L-methionine = 2'-O-methylcytidine(2498) in 23S rRNA + S-adenosyl-L-homocysteine + H(+). In terms of biological role, catalyzes the 2'-O-methylation at nucleotide C2498 in 23S rRNA. The chain is Ribosomal RNA large subunit methyltransferase M from Shewanella oneidensis (strain ATCC 700550 / JCM 31522 / CIP 106686 / LMG 19005 / NCIMB 14063 / MR-1).